The following is a 96-amino-acid chain: UPF0235 protein VC0395_A0010/VC395_0502 (96 aa).

This sequence belongs to the UPF0235 family.

This chain is UPF0235 protein VC0395_A0010/VC395_0502, found in Vibrio cholerae serotype O1 (strain ATCC 39541 / Classical Ogawa 395 / O395).